The following is a 153-amino-acid chain: uncharacterized protein (153 aa).

A2 is subject to N-acetylalanine.

This is an uncharacterized protein from Arabidopsis thaliana (Mouse-ear cress).